A 124-amino-acid chain; its full sequence is MPTIQQLIRTERSRLKAKTKSPALKSCPERRGVCTRVYTSTPKKPNSALRKVARVRLTSGFEVTAYIGGVGHNLQEHSVVLIRGGRVKDLPGVRYHIIRGTLDTAGVKDRRQSRSKYGAKAPKE.

The residue at position 89 (Asp-89) is a 3-methylthioaspartic acid. The tract at residues 104–124 (TAGVKDRRQSRSKYGAKAPKE) is disordered.

The protein belongs to the universal ribosomal protein uS12 family. Part of the 30S ribosomal subunit. Contacts proteins S8 and S17. May interact with IF1 in the 30S initiation complex.

Its function is as follows. With S4 and S5 plays an important role in translational accuracy. In terms of biological role, interacts with and stabilizes bases of the 16S rRNA that are involved in tRNA selection in the A site and with the mRNA backbone. Located at the interface of the 30S and 50S subunits, it traverses the body of the 30S subunit contacting proteins on the other side and probably holding the rRNA structure together. The combined cluster of proteins S8, S12 and S17 appears to hold together the shoulder and platform of the 30S subunit. This chain is Small ribosomal subunit protein uS12, found in Synechococcus sp. (strain CC9605).